The chain runs to 363 residues: Fructose-1,6-bisphosphate aldolase/phosphatase (363 aa).

D11 serves as the catalytic Proton acceptor; for FBP phosphatase activity. D11, H18, D51, and D52 together coordinate Mg(2+). H18 provides a ligand contact to beta-D-fructose 1,6-bisphosphate. Residue H18 coordinates dihydroxyacetone phosphate. Y89 is a binding site for beta-D-fructose 1,6-bisphosphate. Q93 is a Mg(2+) binding site. 102–103 (GN) contacts beta-D-fructose 1,6-bisphosphate. D130 serves as a coordination point for Mg(2+). Position 131 (K131) interacts with beta-D-fructose 1,6-bisphosphate. K131 serves as a coordination point for dihydroxyacetone phosphate. The Proton donor/acceptor; for FBP aldolase activity role is filled by Y230. The Mg(2+) site is built by K233, D234, and D235. K233 functions as the Schiff-base intermediate with DHAP; for FBP aldolase activity in the catalytic mechanism. Residues 243 to 244 (QK), R267, and Y348 each bind beta-D-fructose 1,6-bisphosphate. R267 lines the dihydroxyacetone phosphate pocket.

This sequence belongs to the FBP aldolase/phosphatase family. As to quaternary structure, homooctamer; dimer of tetramers. Requires Mg(2+) as cofactor.

The catalysed reaction is beta-D-fructose 1,6-bisphosphate + H2O = beta-D-fructose 6-phosphate + phosphate. It catalyses the reaction beta-D-fructose 1,6-bisphosphate = D-glyceraldehyde 3-phosphate + dihydroxyacetone phosphate. The protein operates within carbohydrate biosynthesis; gluconeogenesis. In terms of biological role, catalyzes two subsequent steps in gluconeogenesis: the aldol condensation of dihydroxyacetone phosphate (DHAP) and glyceraldehyde-3-phosphate (GA3P) to fructose-1,6-bisphosphate (FBP), and the dephosphorylation of FBP to fructose-6-phosphate (F6P). In Thermus thermophilus (strain ATCC BAA-163 / DSM 7039 / HB27), this protein is Fructose-1,6-bisphosphate aldolase/phosphatase.